A 148-amino-acid chain; its full sequence is Cell division protein SepF (148 aa).

It belongs to the SepF family. In terms of assembly, homodimer. Interacts with FtsZ.

It localises to the cytoplasm. Functionally, cell division protein that is part of the divisome complex and is recruited early to the Z-ring. Probably stimulates Z-ring formation, perhaps through the cross-linking of FtsZ protofilaments. Its function overlaps with FtsA. This is Cell division protein SepF from Alkaliphilus metalliredigens (strain QYMF).